Reading from the N-terminus, the 253-residue chain is Succinate dehydrogenase iron-sulfur subunit (253 aa).

[2Fe-2S] cluster contacts are provided by Cys64, Cys69, and Cys84. The 4Fe-4S ferredoxin-type domain maps to Arg146 to Phe174. [4Fe-4S] cluster contacts are provided by Cys155, Cys158, and Cys161. Cys165, Cys212, and Cys218 together coordinate [3Fe-4S] cluster. Cys222 is a [4Fe-4S] cluster binding site.

Belongs to the succinate dehydrogenase/fumarate reductase iron-sulfur protein family. In B.subtilis succinate dehydrogenase forms part of an enzyme complex containing three subunits: a flavoprotein, an iron-sulfur protein and cytochrome b-558. It depends on [2Fe-2S] cluster as a cofactor. The cofactor is [3Fe-4S] cluster. Requires [4Fe-4S] cluster as cofactor.

It catalyses the reaction a quinone + succinate = fumarate + a quinol. It functions in the pathway carbohydrate metabolism; tricarboxylic acid cycle; fumarate from succinate (bacterial route): step 1/1. This Bacillus subtilis (strain 168) protein is Succinate dehydrogenase iron-sulfur subunit (sdhB).